The chain runs to 379 residues: DNA replication and repair protein RecF (379 aa).

30–37 lines the ATP pocket; sequence GKNAQGKT.

The protein belongs to the RecF family.

The protein resides in the cytoplasm. Its function is as follows. The RecF protein is involved in DNA metabolism; it is required for DNA replication and normal SOS inducibility. RecF binds preferentially to single-stranded, linear DNA. It also seems to bind ATP. This is DNA replication and repair protein RecF from Ligilactobacillus salivarius (strain UCC118) (Lactobacillus salivarius).